The chain runs to 499 residues: Probable cytosol aminopeptidase (499 aa).

2 residues coordinate Mn(2+): K262 and D267. Residue K274 is part of the active site. The Mn(2+) site is built by D285, D344, and E346. Residue R348 is part of the active site.

Belongs to the peptidase M17 family. The cofactor is Mn(2+).

The protein localises to the cytoplasm. The enzyme catalyses Release of an N-terminal amino acid, Xaa-|-Yaa-, in which Xaa is preferably Leu, but may be other amino acids including Pro although not Arg or Lys, and Yaa may be Pro. Amino acid amides and methyl esters are also readily hydrolyzed, but rates on arylamides are exceedingly low.. It catalyses the reaction Release of an N-terminal amino acid, preferentially leucine, but not glutamic or aspartic acids.. In terms of biological role, presumably involved in the processing and regular turnover of intracellular proteins. Catalyzes the removal of unsubstituted N-terminal amino acids from various peptides. The protein is Probable cytosol aminopeptidase of Protochlamydia amoebophila (strain UWE25).